We begin with the raw amino-acid sequence, 206 residues long: Small ribosomal subunit protein uS3 (206 aa).

The KH type-2 domain occupies 39-107 (IRSYINESFK…SVEVNVVGIK (69 aa)).

It belongs to the universal ribosomal protein uS3 family. In terms of assembly, part of the 30S ribosomal subunit. Forms a tight complex with proteins S10 and S14.

Functionally, binds the lower part of the 30S subunit head. Binds mRNA in the 70S ribosome, positioning it for translation. The chain is Small ribosomal subunit protein uS3 from Wolbachia sp. subsp. Brugia malayi (strain TRS).